A 353-amino-acid polypeptide reads, in one-letter code: uncharacterized protein (353 aa).

The N-terminal stretch at 1 to 18 (MKFVLFAQLAAVAAPAIA) is a signal peptide. The segment at 94-119 (EGGNVRRVPGGPSQSARQIGDSSTPM) is disordered. Residues 105–119 (PSQSARQIGDSSTPM) show a composition bias toward polar residues. Residues Asn-165 and Asn-312 are each glycosylated (N-linked (GlcNAc...) asparagine).

It belongs to the glycosyl hydrolase 3 family.

It localises to the secreted. This is an uncharacterized protein from Arthroderma benhamiae (strain ATCC MYA-4681 / CBS 112371) (Trichophyton mentagrophytes).